An 865-amino-acid polypeptide reads, in one-letter code: Alanine--tRNA ligase (865 aa).

4 residues coordinate Zn(2+): His-552, His-556, Cys-654, and His-658.

It belongs to the class-II aminoacyl-tRNA synthetase family. Zn(2+) is required as a cofactor.

It is found in the cytoplasm. The enzyme catalyses tRNA(Ala) + L-alanine + ATP = L-alanyl-tRNA(Ala) + AMP + diphosphate. Catalyzes the attachment of alanine to tRNA(Ala) in a two-step reaction: alanine is first activated by ATP to form Ala-AMP and then transferred to the acceptor end of tRNA(Ala). Also edits incorrectly charged Ser-tRNA(Ala) and Gly-tRNA(Ala) via its editing domain. The protein is Alanine--tRNA ligase of Coxiella burnetii (strain Dugway 5J108-111).